A 415-amino-acid chain; its full sequence is MLLPSNLTTSTLMTSSSESYDADNPGLPPEPILSDYVEMFTLVLNFIVGAPLNLAAYTQLSERPTSTRLDLLKRSLNYSDLLVLFIYVPSRACWLLTYDWRGGDALCKIVKMFHTFAFQSSSNVIVCIAVDRLLSVLSPSHHSPNKALKRTKMMLIVAWIVALVISCPQLFIWKAYLALPEYNWSQCLQIWEIARMEKFNKPQVVPEFDAEFWYSILHISLVFWIPCIIIMLSYIIVISWVWINSRPSIRHTSSFSFHTGCDTVDTVLTRASEWNPLKTFSRHVNIKEPEKPMTTPRIVVSDETEVPLTQRPSISPSEASAVMRTGVHTSTSYNANLNRSRALRVSLLLVVAYIICWLPYNLISLIQFLDRDFFSSYLKHVHFCQQLIIFNSVVNPWLYGFFGPRRPSTTGAGRH.

The segment covering 1–19 (MLLPSNLTTSTLMTSSSES) has biased composition (low complexity). A disordered region spans residues 1-25 (MLLPSNLTTSTLMTSSSESYDADNP). Over 1–35 (MLLPSNLTTSTLMTSSSESYDADNPGLPPEPILSD) the chain is Extracellular. The chain crosses the membrane as a helical span at residues 36-56 (YVEMFTLVLNFIVGAPLNLAA). At 57–75 (YTQLSERPTSTRLDLLKRS) the chain is on the cytoplasmic side. The helical transmembrane segment at 76–96 (LNYSDLLVLFIYVPSRACWLL) threads the bilayer. Residues 97–108 (TYDWRGGDALCK) lie on the Extracellular side of the membrane. The cysteines at positions 107 and 187 are disulfide-linked. A helical transmembrane segment spans residues 109 to 129 (IVKMFHTFAFQSSSNVIVCIA). Residues 130-152 (VDRLLSVLSPSHHSPNKALKRTK) lie on the Cytoplasmic side of the membrane. The chain crosses the membrane as a helical span at residues 153–173 (MMLIVAWIVALVISCPQLFIW). The Extracellular segment spans residues 174–222 (KAYLALPEYNWSQCLQIWEIARMEKFNKPQVVPEFDAEFWYSILHISLV). A helical membrane pass occupies residues 223 to 243 (FWIPCIIIMLSYIIVISWVWI). Residues 244–345 (NSRPSIRHTS…NLNRSRALRV (102 aa)) lie on the Cytoplasmic side of the membrane. Residues 346–366 (SLLLVVAYIICWLPYNLISLI) form a helical membrane-spanning segment. The Extracellular segment spans residues 367–382 (QFLDRDFFSSYLKHVH). Residues 383–403 (FCQQLIIFNSVVNPWLYGFFG) traverse the membrane as a helical segment. Residues 404–415 (PRRPSTTGAGRH) are Cytoplasmic-facing.

Belongs to the G-protein coupled receptor 1 family. As to quaternary structure, heterodimer; with daf-37. In terms of tissue distribution, expressed in the ASI and ASK chemosensory neurons and in the IL-2 interneurons, but weakly expressed in other head neurons in hermaphrodites.

It is found in the cell membrane. Its function is as follows. G-protein coupled receptor (GPCR) that forms a heterodimer with daf-37 to control dauer formation and behavior. Required for the response to dauer inducing pheromones such as the ascarosides ascr#2, ascr#3 and ascr#5. The chain is G-protein coupled receptor daf-38 from Caenorhabditis elegans.